We begin with the raw amino-acid sequence, 267 residues long: Cytochrome b (267 aa).

Helical transmembrane passes span 4–24 (FGSL…LLAA), 48–69 (WLIR…YLHI), 84–104 (WNTG…GYVL), and 149–169 (FFTL…IHLT). Heme b contacts are provided by histidine 54 and histidine 68. Residues histidine 153 and histidine 167 each contribute to the heme b site. Histidine 172 is a binding site for a ubiquinone. 2 helical membrane-spanning segments follow: residues 197–217 (LKDI…ALFA) and 259–267 (LGGVLALAA).

This sequence belongs to the cytochrome b family. As to quaternary structure, the cytochrome bc1 complex contains 11 subunits: 3 respiratory subunits (MT-CYB, CYC1 and UQCRFS1), 2 core proteins (UQCRC1 and UQCRC2) and 6 low-molecular weight proteins (UQCRH/QCR6, UQCRB/QCR7, UQCRQ/QCR8, UQCR10/QCR9, UQCR11/QCR10 and a cleavage product of UQCRFS1). This cytochrome bc1 complex then forms a dimer. Heme b is required as a cofactor.

It localises to the mitochondrion inner membrane. Functionally, component of the ubiquinol-cytochrome c reductase complex (complex III or cytochrome b-c1 complex) that is part of the mitochondrial respiratory chain. The b-c1 complex mediates electron transfer from ubiquinol to cytochrome c. Contributes to the generation of a proton gradient across the mitochondrial membrane that is then used for ATP synthesis. This is Cytochrome b (MT-CYB) from Raphus cucullatus (Dodo).